The chain runs to 63 residues: Large ribosomal subunit protein uL30 (63 aa).

Belongs to the universal ribosomal protein uL30 family. In terms of assembly, part of the 50S ribosomal subunit.

In Bradyrhizobium sp. (strain ORS 278), this protein is Large ribosomal subunit protein uL30.